The primary structure comprises 277 residues: Caspase-3 (277 aa).

Met1 carries the N-acetylmethionine modification. 2 consecutive propeptides follow at residues Met1–Asp9 and Ser10–Asp28. Residue Lys11 is modified to N6-acetyllysine. At Ser26 the chain carries Phosphoserine. Catalysis depends on residues His121 and Cys163. Residue Cys163 is modified to S-nitrosocysteine; in inhibited form.

It belongs to the peptidase C14A family. In terms of assembly, heterotetramer that consists of two anti-parallel arranged heterodimers, each one formed by a 17 kDa (p17) and a 12 kDa (p12) subunit. Interacts with BIRC6/bruce. In terms of processing, cleavage by granzyme B, caspase-6, caspase-8 and caspase-10 generates the two active subunits. Additional processing of the propeptides is likely due to the autocatalytic activity of the activated protease. Active heterodimers between the small subunit of caspase-7 protease and the large subunit of caspase-3 also occur and vice versa. Post-translationally, S-nitrosylated on its catalytic site cysteine in unstimulated cell lines and denitrosylated upon activation of the Fas apoptotic pathway, associated with an increase in intracellular caspase activity. Fas therefore activates caspase-3 not only by inducing the cleavage of the caspase zymogen to its active subunits, but also by stimulating the denitrosylation of its active site thiol. Ubiquitinated by BIRC6; this activity is inhibited by DIABLO/SMAC.

The protein localises to the cytoplasm. The catalysed reaction is Strict requirement for an Asp residue at positions P1 and P4. It has a preferred cleavage sequence of Asp-Xaa-Xaa-Asp-|- with a hydrophobic amino-acid residue at P2 and a hydrophilic amino-acid residue at P3, although Val or Ala are also accepted at this position.. With respect to regulation, inhibited by BIRC6; following inhibition of BIRC6-caspase binding by DIABLO/SMAC, BIRC6 is subjected to caspase cleavage, leading to an increase in active caspases. Functionally, involved in the activation cascade of caspases responsible for apoptosis execution. At the onset of apoptosis, it proteolytically cleaves poly(ADP-ribose) polymerase PARP1 at a '216-Asp-|-Gly-217' bond. Cleaves and activates sterol regulatory element binding proteins (SREBPs) between the basic helix-loop-helix leucine zipper domain and the membrane attachment domain. Cleaves and activates caspase-6, -7 and -9 (CASP6, CASP7 and CASP9, respectively). Cleaves and inactivates interleukin-18 (IL18). Triggers cell adhesion in sympathetic neurons through RET cleavage. Cleaves IL-1 beta between an Asp and an Ala, releasing the mature cytokine which is involved in a variety of inflammatory processes. Cleaves and inhibits serine/threonine-protein kinase AKT1 in response to oxidative stress. Acts as an inhibitor of type I interferon production during virus-induced apoptosis by mediating cleavage of antiviral proteins CGAS, IRF3 and MAVS, thereby preventing cytokine overproduction. Also involved in pyroptosis by mediating cleavage and activation of gasdermin-E (GSDME). Cleaves XRCC4 and phospholipid scramblase proteins XKR4, XKR8 and XKR9, leading to promote phosphatidylserine exposure on apoptotic cell surface. Cleaves BIRC6 following inhibition of BIRC6-caspase binding by DIABLO/SMAC. This Macaca fascicularis (Crab-eating macaque) protein is Caspase-3 (CASP3).